The chain runs to 476 residues: Viral inhibitor of caspase-8-induced apoptosis (476 aa).

This sequence belongs to the herpesviridae US22 family. In terms of assembly, interacts with host pro-caspase-8/CASP8; this interaction inhibits CASP8 activation.

Functionally, plays a role in the inhibition of apoptosis by interacting with the pro-domain of pro-caspase-8/CASP8 and thus preventing its activation. The sequence is that of Viral inhibitor of caspase-8-induced apoptosis (UL36) from Human cytomegalovirus (strain Merlin) (HHV-5).